The chain runs to 91 residues: MLGKNDIKNVHKKLNVAKDFQNFNDEHCNIVTLSKVINDEGKKHIVVEAEVAFKGLTEEQKQEYQNRDGKNWYNVMPECERKLVDQYTDTI.

This is an uncharacterized protein from Rickettsia conorii (strain ATCC VR-613 / Malish 7).